The primary structure comprises 619 residues: ATP-dependent zinc metalloprotease FtsH (619 aa).

Residues 1-11 lie on the Cytoplasmic side of the membrane; the sequence is MSNTDPQPPQK. A helical transmembrane segment spans residues 12 to 32; it reads LPLNWVVWTLAVALMLYYLPA. The Periplasmic portion of the chain corresponds to 33-120; sequence MRDRPEPAIK…EVKEGHDASS (88 aa). A helical membrane pass occupies residues 121–141; it reads SKVILLSYLPWIMFMIILFWL. Over 142–619 the chain is Cytoplasmic; that stretch reads SRRTFRNFSG…IDECLQTGAS (478 aa). 216–223 is a binding site for ATP; sequence GPPGTGKT. His-437 provides a ligand contact to Zn(2+). Glu-438 is a catalytic residue. Positions 441 and 513 each coordinate Zn(2+).

It in the central section; belongs to the AAA ATPase family. In the C-terminal section; belongs to the peptidase M41 family. As to quaternary structure, homohexamer. Zn(2+) serves as cofactor.

The protein localises to the cell inner membrane. Acts as a processive, ATP-dependent zinc metallopeptidase for both cytoplasmic and membrane proteins. Plays a role in the quality control of integral membrane proteins. The protein is ATP-dependent zinc metalloprotease FtsH of Hahella chejuensis (strain KCTC 2396).